A 325-amino-acid polypeptide reads, in one-letter code: L-lactate dehydrogenase (325 aa).

Residues Val21, Asp42, Lys47, Tyr73, and 87 to 88 each bind NAD(+); that span reads GA. Residues Gln90, Arg96, and 128–131 each bind substrate; that span reads NPVD. NAD(+) is bound by residues 126 to 128 and Ser151; that span reads ATN. 156-159 is a binding site for substrate; the sequence is DTAR. Positions 161 and 176 each coordinate beta-D-fructose 1,6-bisphosphate. His183 serves as the catalytic Proton acceptor. Tyr228 is modified (phosphotyrosine). Thr237 contacts substrate.

The protein belongs to the LDH/MDH superfamily. LDH family. As to quaternary structure, homotetramer.

The protein resides in the cytoplasm. It carries out the reaction (S)-lactate + NAD(+) = pyruvate + NADH + H(+). Its pathway is fermentation; pyruvate fermentation to lactate; (S)-lactate from pyruvate: step 1/1. Its activity is regulated as follows. Allosterically activated by fructose 1,6-bisphosphate (FBP). Functionally, catalyzes the conversion of lactate to pyruvate. The sequence is that of L-lactate dehydrogenase from Shouchella clausii (strain KSM-K16) (Alkalihalobacillus clausii).